We begin with the raw amino-acid sequence, 193 residues long: BH3-interacting domain death agonist (193 aa).

Positions 87-101 (IAAQLAEIGDQLDKQ) match the BH3 motif.

In terms of assembly, forms heterodimers either with the pro-apoptotic protein BAX or the anti-apoptotic protein Bcl-2.

It localises to the cytoplasm. Its subcellular location is the mitochondrion outer membrane. Its function is as follows. Induces caspases and apoptosis. Counters the protective effect of Bcl-2. The sequence is that of BH3-interacting domain death agonist (BID) from Gallus gallus (Chicken).